Reading from the N-terminus, the 550-residue chain is Iduronate 2-sulfatase (550 aa).

The signal sequence occupies residues 1–25; that stretch reads MPPPRTGRGLLWLGLVLSSVCVALG. A propeptide spanning residues 26 to 33 is cleaved from the precursor; it reads SETQANST. Ca(2+) contacts are provided by Asp45, Asp46, and Cys84. Cys84 serves as the catalytic Nucleophile. Cys84 carries the post-translational modification 3-oxoalanine (Cys). N-linked (GlcNAc...) asparagine glycosylation occurs at Asn115. Residue His138 is part of the active site. Asn144 is a glycosylation site (N-linked (GlcNAc...) asparagine). Cysteines 171 and 184 form a disulfide. Asn246, Asn280, and Asn325 each carry an N-linked (GlcNAc...) asparagine glycan. Residues Asp334 and His335 each coordinate Ca(2+). Cysteines 422 and 432 form a disulfide. Residues Asn513 and Asn537 are each glycosylated (N-linked (GlcNAc...) asparagine).

Belongs to the sulfatase family. Monomer. The 58-kDa mature form is composed of two chains resulting from proteolitic processing, the 42-kDa chain and the 14-kDa chain that remain stably associated and form the 58-kDa intermediate form which is enzymatically active. Requires Ca(2+) as cofactor. In terms of processing, synthesized as a 75-kDa precursor form in the endoplasmic reticulum (ER), and then processed by proteolytic cleavage through various intermediates to yield a 55-kDa mature form, with the release of an 18 kDa polypeptide. Post-translationally, the conversion to 3-oxoalanine (also known as C-formylglycine, FGly), of a serine or cysteine residue in prokaryotes and of a cysteine residue in eukaryotes, is critical for catalytic activity. Liver, kidney, lung, and placenta.

It localises to the lysosome. It catalyses the reaction Hydrolysis of the 2-sulfate groups of the L-iduronate 2-sulfate units of dermatan sulfate, heparan sulfate and heparin.. Its function is as follows. Lysosomal enzyme involved in the degradation pathway of dermatan sulfate and heparan sulfate. The polypeptide is Iduronate 2-sulfatase (IDS) (Homo sapiens (Human)).